The following is a 661-amino-acid chain: Peroxisomal acyl-coenzyme A oxidase 1 (661 aa).

Ser-26 is subject to Phosphoserine. At Lys-65 the chain carries N6-acetyllysine. Lys-89 is subject to N6-succinyllysine. FAD is bound at residue Thr-139. Residue Lys-159 is modified to N6-succinyllysine. Gly-178 contributes to the FAD binding site. Lys-216 is subject to N6-acetyllysine. N6-succinyllysine is present on Lys-241. Residues Lys-255, Lys-267, and Lys-272 each carry the N6-acetyllysine modification. Residue Lys-349 is modified to N6-succinyllysine. Residue Glu-421 is the Proton acceptor of the active site. N6-acetyllysine; alternate is present on residues Lys-437 and Lys-446. An N6-succinyllysine; alternate mark is found at Lys-437 and Lys-446. An N6-acetyllysine modification is found at Lys-500. At Lys-512 the chain carries N6-acetyllysine; alternate. Lys-512 is subject to N6-succinyllysine; alternate. At Lys-542 the chain carries N6-succinyllysine. The residue at position 637 (Lys-637) is an N6-acetyllysine; alternate. Lys-637 carries the post-translational modification N6-succinyllysine; alternate. Lys-643 bears the N6-succinyllysine mark. At Ser-649 the chain carries Phosphoserine. Lys-652 is modified (N6-acetyllysine). Lys-655 is modified (N6-succinyllysine). A Microbody targeting signal motif is present at residues 659–661 (SKL).

The protein belongs to the acyl-CoA oxidase family. Homodimer. Interacts with LONP2. FAD serves as cofactor.

It is found in the peroxisome. The catalysed reaction is a 2,3-saturated acyl-CoA + O2 = a (2E)-enoyl-CoA + H2O2. It carries out the reaction hexadecanoyl-CoA + O2 = (2E)-hexadecenoyl-CoA + H2O2. The enzyme catalyses dodecanoyl-CoA + O2 = (2E)-dodecenoyl-CoA + H2O2. It catalyses the reaction octanoyl-CoA + O2 = (2E)-octenoyl-CoA + H2O2. The catalysed reaction is decanoyl-CoA + O2 = (2E)-decenoyl-CoA + H2O2. It carries out the reaction tetradecanoyl-CoA + O2 = (2E)-tetradecenoyl-CoA + H2O2. The enzyme catalyses hexadecanedioyl-CoA + O2 = (2E)-hexadecenedioyl-CoA + H2O2. It catalyses the reaction tetracosanoyl-CoA + O2 = (2E)-tetracosenoyl-CoA + H2O2. The catalysed reaction is glutaryl-CoA + O2 = (2E)-glutaconyl-CoA + H2O2. It carries out the reaction hexanoyl-CoA + O2 = (2E)-hexenoyl-CoA + H2O2. The enzyme catalyses octadecanoyl-CoA + O2 = (2E)-octadecenoyl-CoA + H2O2. It catalyses the reaction (5Z,8Z,11Z,14Z,17Z)-eicosapentaenoyl-CoA + O2 = (2E,5Z,8Z,11Z,14Z,17Z)-icosahexaenoyl-CoA + H2O2. The catalysed reaction is (6Z,9Z,12Z,15Z,18Z,21Z)-tetracosahexaenoyl-CoA + O2 = (2E,6Z,9Z,12Z,15Z,18Z,21Z)-tetracosaheptaenoyl-CoA + H2O2. The protein operates within lipid metabolism; peroxisomal fatty acid beta-oxidation. Functionally, involved in the initial and rate-limiting step of peroxisomal beta-oxidation of straight-chain saturated and unsaturated very-long-chain fatty acids. Catalyzes the desaturation of fatty acyl-CoAs such as palmitoyl-CoA (hexadecanoyl-CoA) to 2-trans-enoyl-CoAs ((2E)-enoyl-CoAs) such as (2E)-hexadecenoyl-CoA, and donates electrons directly to molecular oxygen (O(2)), thereby producing hydrogen peroxide (H(2)O(2)). The chain is Peroxisomal acyl-coenzyme A oxidase 1 from Cavia porcellus (Guinea pig).